Here is a 565-residue protein sequence, read N- to C-terminus: Urocanate hydratase (565 aa).

NAD(+) is bound by residues 58 to 59 (GG), Gln136, 182 to 184 (GMG), Glu202, Arg207, 245 to 246 (NA), 266 to 270 (QTSAH), 276 to 277 (YL), and Tyr325. The active site involves Cys413. Gly495 is a binding site for NAD(+).

Belongs to the urocanase family. NAD(+) is required as a cofactor.

It localises to the cytoplasm. The enzyme catalyses 4-imidazolone-5-propanoate = trans-urocanate + H2O. The protein operates within amino-acid degradation; L-histidine degradation into L-glutamate; N-formimidoyl-L-glutamate from L-histidine: step 2/3. Catalyzes the conversion of urocanate to 4-imidazolone-5-propionate. In Vibrio vulnificus (strain CMCP6), this protein is Urocanate hydratase.